We begin with the raw amino-acid sequence, 79 residues long: Sec-independent protein translocase protein TatA (79 aa).

The chain crosses the membrane as a helical span at residues 1-21 (MGSLSIWHWIVVIAVILLLFG). Basic and acidic residues predominate over residues 43–60 (MQDDEKTAEKPEPVKTID). The tract at residues 43–79 (MQDDEKTAEKPEPVKTIDHNAPAPGASRSDVGSKTTV) is disordered.

It belongs to the TatA/E family. As to quaternary structure, the Tat system comprises two distinct complexes: a TatABC complex, containing multiple copies of TatA, TatB and TatC subunits, and a separate TatA complex, containing only TatA subunits. Substrates initially bind to the TatABC complex, which probably triggers association of the separate TatA complex to form the active translocon.

It is found in the cell inner membrane. Part of the twin-arginine translocation (Tat) system that transports large folded proteins containing a characteristic twin-arginine motif in their signal peptide across membranes. TatA could form the protein-conducting channel of the Tat system. The chain is Sec-independent protein translocase protein TatA from Nitrobacter hamburgensis (strain DSM 10229 / NCIMB 13809 / X14).